The following is a 445-amino-acid chain: MSMTPREIVHELNRHIIGQDDAKRAVAIALRNRWRRMQLPEELRVEVTPKNILMIGPTGVGKTEIARRLAKLANAPFIKVEATKFTEVGYVGRDVESIIRDLADAAIKLLREQEIVKVRHRAEDAAEDRILDALLPPARVGFNEDPAQSNDSNTRQLFRKRLREGQLDDKEIEIEINEAVGVDISAPPGMEEMTNQLQSLFANMGKGKTKSRKLKVKEALKLVREEEAGRLVNDEELKVKALEAVEQHGIVFIDEIDKVAKRGNSGGVDVSREGVQRDLLPLIEGCTVNTKLGMVKTDHILFIASGAFHLSKPSDLVPELQGRLPIRVELKALSPQDFERILTEPHASLTEQYRELLKTEGLKIEFKPDGIKRLAEIAWQVNEKTENIGARRLHTLLERLLEEVSFSAGDLAISPDAAPIEIDADYVNSHLGDLAENEDLSRYIL.

ATP-binding positions include I17, 59 to 64 (GVGKTE), D254, E319, and R391.

The protein belongs to the ClpX chaperone family. HslU subfamily. As to quaternary structure, a double ring-shaped homohexamer of HslV is capped on each side by a ring-shaped HslU homohexamer. The assembly of the HslU/HslV complex is dependent on binding of ATP.

Its subcellular location is the cytoplasm. Functionally, ATPase subunit of a proteasome-like degradation complex; this subunit has chaperone activity. The binding of ATP and its subsequent hydrolysis by HslU are essential for unfolding of protein substrates subsequently hydrolyzed by HslV. HslU recognizes the N-terminal part of its protein substrates and unfolds these before they are guided to HslV for hydrolysis. The polypeptide is ATP-dependent protease ATPase subunit HslU (Pseudomonas syringae pv. tomato (strain ATCC BAA-871 / DC3000)).